Here is a 269-residue protein sequence, read N- to C-terminus: Putative hydro-lyase RL2444 (269 aa).

This sequence belongs to the D-glutamate cyclase family.

The sequence is that of Putative hydro-lyase RL2444 from Rhizobium johnstonii (strain DSM 114642 / LMG 32736 / 3841) (Rhizobium leguminosarum bv. viciae).